Consider the following 422-residue polypeptide: UDP-N-acetylglucosamine 1-carboxyvinyltransferase (422 aa).

Phosphoenolpyruvate is bound at residue 22 to 23; it reads KN. Residue R94 participates in UDP-N-acetyl-alpha-D-glucosamine binding. Catalysis depends on C118, which acts as the Proton donor. Residue C118 is modified to 2-(S-cysteinyl)pyruvic acid O-phosphothioketal. Residues 123 to 127, D309, and I331 each bind UDP-N-acetyl-alpha-D-glucosamine; that span reads RPVDL.

Belongs to the EPSP synthase family. MurA subfamily.

The protein localises to the cytoplasm. It catalyses the reaction phosphoenolpyruvate + UDP-N-acetyl-alpha-D-glucosamine = UDP-N-acetyl-3-O-(1-carboxyvinyl)-alpha-D-glucosamine + phosphate. It functions in the pathway cell wall biogenesis; peptidoglycan biosynthesis. Functionally, cell wall formation. Adds enolpyruvyl to UDP-N-acetylglucosamine. This Cereibacter sphaeroides (strain ATCC 17029 / ATH 2.4.9) (Rhodobacter sphaeroides) protein is UDP-N-acetylglucosamine 1-carboxyvinyltransferase.